The chain runs to 157 residues: SsrA-binding protein (157 aa).

The tract at residues 134–157 is disordered; the sequence is HDKRESEKKRDWGREKGRLLRARG. Residues 135 to 151 show a composition bias toward basic and acidic residues; the sequence is DKRESEKKRDWGREKGR.

It belongs to the SmpB family.

It localises to the cytoplasm. In terms of biological role, required for rescue of stalled ribosomes mediated by trans-translation. Binds to transfer-messenger RNA (tmRNA), required for stable association of tmRNA with ribosomes. tmRNA and SmpB together mimic tRNA shape, replacing the anticodon stem-loop with SmpB. tmRNA is encoded by the ssrA gene; the 2 termini fold to resemble tRNA(Ala) and it encodes a 'tag peptide', a short internal open reading frame. During trans-translation Ala-aminoacylated tmRNA acts like a tRNA, entering the A-site of stalled ribosomes, displacing the stalled mRNA. The ribosome then switches to translate the ORF on the tmRNA; the nascent peptide is terminated with the 'tag peptide' encoded by the tmRNA and targeted for degradation. The ribosome is freed to recommence translation, which seems to be the essential function of trans-translation. The protein is SsrA-binding protein of Nitrobacter hamburgensis (strain DSM 10229 / NCIMB 13809 / X14).